The chain runs to 122 residues: Cytochrome c3 hydrogenase large chain (122 aa).

The cofactor is Fe cation.

The catalysed reaction is 2 Fe(III)-[cytochrome c3] + H2 = 2 Fe(II)-[cytochrome c3] + 2 H(+). This chain is Cytochrome c3 hydrogenase large chain (hoxG), found in Acidithiobacillus ferrooxidans (Thiobacillus ferrooxidans).